The sequence spans 201 residues: Sterile alpha motif domain-containing protein 12 (201 aa).

One can recognise an SAM domain in the interval 77–143 (WTQQDVCKWL…LQQVLQLKVR (67 aa)).

As to expression, expressed in the brain.

The chain is Sterile alpha motif domain-containing protein 12 (SAMD12) from Homo sapiens (Human).